A 360-amino-acid polypeptide reads, in one-letter code: Methionine import ATP-binding protein MetN (360 aa).

Residues 1 to 22 (MSHTASTPTPEEYSAQQPSTQG) form a disordered region. The region spanning 25–265 (VEFRGITKVF…PQTQVAQKFV (241 aa)) is the ABC transporter domain. 62–69 (GYSGAGKS) is an ATP binding site.

Belongs to the ABC transporter superfamily. Methionine importer (TC 3.A.1.24) family. In terms of assembly, the complex is composed of two ATP-binding proteins (MetN), two transmembrane proteins (MetI) and a solute-binding protein (MetQ).

Its subcellular location is the cell membrane. The enzyme catalyses L-methionine(out) + ATP + H2O = L-methionine(in) + ADP + phosphate + H(+). The catalysed reaction is D-methionine(out) + ATP + H2O = D-methionine(in) + ADP + phosphate + H(+). Part of the ABC transporter complex MetNIQ involved in methionine import. Responsible for energy coupling to the transport system. The polypeptide is Methionine import ATP-binding protein MetN (Corynebacterium glutamicum (strain ATCC 13032 / DSM 20300 / JCM 1318 / BCRC 11384 / CCUG 27702 / LMG 3730 / NBRC 12168 / NCIMB 10025 / NRRL B-2784 / 534)).